The following is a 268-amino-acid chain: Sexual development regulator velC (268 aa).

Over residues 1–13 the composition is skewed to basic and acidic residues; sequence MPHGFDKLLHPEP. Disordered regions lie at residues 1 to 124 and 142 to 165; these read MPHG…DNFS and DPDP…NPPH. The segment covering 14 to 26 has biased composition (pro residues); the sequence is EPQSPSPPPPPRR. Positions 28–257 constitute a Velvet domain; sequence STQSRYHLHI…ELGFVELKTR (230 aa). Positions 92–121 are enriched in basic and acidic residues; it reads DGNRDREREREHERERERERETDGVARTDD.

The protein belongs to the velvet family. VelC subfamily. As to quaternary structure, interacts with velA and vosA.

It is found in the nucleus. Its function is as follows. Velvet-domain-containing protein that acts as a positive regulator of sexual development. In Penicillium rubens (strain ATCC 28089 / DSM 1075 / NRRL 1951 / Wisconsin 54-1255) (Penicillium chrysogenum), this protein is Sexual development regulator velC.